A 1399-amino-acid chain; its full sequence is DNA-directed RNA polymerase subunit beta' (1399 aa).

Zn(2+)-binding residues include Cys71, Cys73, Cys86, and Cys89. Mg(2+) contacts are provided by Asp462, Asp464, and Asp466. Zn(2+)-binding residues include Cys810, Cys884, Cys891, and Cys894. A disordered region spans residues 1379 to 1399; the sequence is KQAAIVPSQPEPQPLALPPAE. Pro residues predominate over residues 1387-1399; the sequence is QPEPQPLALPPAE.

This sequence belongs to the RNA polymerase beta' chain family. As to quaternary structure, the RNAP catalytic core consists of 2 alpha, 1 beta, 1 beta' and 1 omega subunit. When a sigma factor is associated with the core the holoenzyme is formed, which can initiate transcription. Mg(2+) serves as cofactor. The cofactor is Zn(2+).

It carries out the reaction RNA(n) + a ribonucleoside 5'-triphosphate = RNA(n+1) + diphosphate. DNA-dependent RNA polymerase catalyzes the transcription of DNA into RNA using the four ribonucleoside triphosphates as substrates. This Bradyrhizobium sp. (strain BTAi1 / ATCC BAA-1182) protein is DNA-directed RNA polymerase subunit beta'.